The chain runs to 542 residues: CTP synthase (542 aa).

The interval 1-265 (MARYVFITGG…DDEVLAAFGI (265 aa)) is amidoligase domain. Residue serine 13 coordinates CTP. Serine 13 serves as a coordination point for UTP. Residues 14-19 (SLGKGI) and aspartate 71 each bind ATP. Residues aspartate 71 and glutamate 139 each coordinate Mg(2+). CTP is bound by residues 146–148 (DIE), 186–191 (KTKPTQ), and lysine 222. UTP contacts are provided by residues 186–191 (KTKPTQ) and lysine 222. A Glutamine amidotransferase type-1 domain is found at 291–541 (TIAIVGKYTG…IEAATEQSRL (251 aa)). L-glutamine is bound at residue glycine 353. Cysteine 380 functions as the Nucleophile; for glutamine hydrolysis in the catalytic mechanism. L-glutamine-binding positions include 381–384 (FGMQ), glutamate 404, and arginine 469. Active-site residues include histidine 514 and glutamate 516.

Belongs to the CTP synthase family. As to quaternary structure, homotetramer.

It carries out the reaction UTP + L-glutamine + ATP + H2O = CTP + L-glutamate + ADP + phosphate + 2 H(+). The catalysed reaction is L-glutamine + H2O = L-glutamate + NH4(+). It catalyses the reaction UTP + NH4(+) + ATP = CTP + ADP + phosphate + 2 H(+). Its pathway is pyrimidine metabolism; CTP biosynthesis via de novo pathway; CTP from UDP: step 2/2. Allosterically activated by GTP, when glutamine is the substrate; GTP has no effect on the reaction when ammonia is the substrate. The allosteric effector GTP functions by stabilizing the protein conformation that binds the tetrahedral intermediate(s) formed during glutamine hydrolysis. Inhibited by the product CTP, via allosteric rather than competitive inhibition. Catalyzes the ATP-dependent amination of UTP to CTP with either L-glutamine or ammonia as the source of nitrogen. Regulates intracellular CTP levels through interactions with the four ribonucleotide triphosphates. The sequence is that of CTP synthase from Rhizobium johnstonii (strain DSM 114642 / LMG 32736 / 3841) (Rhizobium leguminosarum bv. viciae).